The primary structure comprises 970 residues: uncharacterized protein (970 aa).

A helical transmembrane segment spans residues 11-31; it reads WILKIGTILGLVCLGLFGVIF. The disordered stretch occupies residues 366–387; that stretch reads ASNSNDNNNQNNNNNNNSSDVI. Over residues 367-387 the composition is skewed to low complexity; sequence SNSNDNNNQNNNNNNNSSDVI. 11 helical membrane passes run 515 to 535, 537 to 557, 558 to 578, 614 to 634, 645 to 665, 726 to 746, 762 to 782, 789 to 809, 816 to 836, 877 to 897, and 903 to 923; these read FASS…LLTL, YKLL…SSLV, IFSA…FFVI, FFAN…VIYL, LMAI…IVLI, FLFV…LYLV, SNGI…YCLI, CLSY…VMYL, IDQS…FFAA, IESS…FGGI, and LVIF…AFLP.

Its subcellular location is the cell membrane. This is an uncharacterized protein from Mycoplasma genitalium (strain ATCC 33530 / DSM 19775 / NCTC 10195 / G37) (Mycoplasmoides genitalium).